The following is a 218-amino-acid chain: DNA-directed RNA polymerases IV and V subunit 5B (218 aa).

It belongs to the archaeal Rpo5/eukaryotic RPB5 RNA polymerase subunit family. In terms of assembly, component of the RNA polymerase IV and V complexes. Interacts with NRPD1. As to expression, expressed inleaves, flower buds, flowers and siliques.

It localises to the nucleus. In terms of biological role, DNA-dependent RNA polymerase catalyzes the transcription of DNA into RNA using the four ribonucleoside triphosphates as substrates. Component of RNA polymerases IV and V which mediate short-interfering RNAs (siRNA) accumulation and subsequent RNA-directed DNA methylation-dependent (RdDM) transcriptional gene silencing (TGS) of endogenous repeated sequences, including transposable elements. This Arabidopsis thaliana (Mouse-ear cress) protein is DNA-directed RNA polymerases IV and V subunit 5B (NRPD5B).